Reading from the N-terminus, the 541-residue chain is Forkhead box protein O (541 aa).

Residues 118-150 show a composition bias toward polar residues; it reads NEQCGQLGGASSNGSTAMLHTPDGSNSHQTSFP. Disordered regions lie at residues 118–168 and 252–291; these read NEQC…GKKT and WVIN…GAKK. Positions 175–268 form a DNA-binding region, fork-head; it reads WGNMSYAELI…KPGRNPRRTR (94 aa). The residue at position 273 (T273) is a Phosphothreonine. The residue at position 319 (S319) is a Phosphoserine; by CaMK2.

As to quaternary structure, interacts with rle-1. Interacts with unc-43 and tax-6. Interacts with jnk-1. Interacts with ftt-2. Interacts with prmt-1. Interacts with hcf-1. Post-translationally, phosphorylated by akt-1 and/or akt-2. Phosphorylated by sgk-1. Phosphorylated by unc-43. Phosphorylated by jnk-1. Dephosphorylated by tax-6 in vitro. Ubiquitinated. Ubiquitination by rle-1 leads to proteasome-mediated degradation. In terms of processing, methylation by prmt-1 prevents phosphorylation and promotes translocation to the nucleus to allow for daf-16-dependent transcription. As to expression, isoform b and isoform c are expressed in ectoderm, muscles, intestine and neurons. Isoform b is also expressed in the pharynx. The intestine appears to be the primary site of longevity function.

The protein resides in the nucleus. The protein localises to the cytoplasm. Forkhead-type transcription factor. Binds to the promoters of genes that contain the daf-16/FOXO binding element (DBE), TTGTTTAC, in their regulatory region. Functions in the Insulin/IGF-1-like signaling (IIS) mediated pathway which affects lipogenesis, lifespan, starvation survival, heat shock and oxidative stress responses, sleep, associative memory, and dauer formation. Longevity signaling predominantly arises from expression in the intestine. Acts in the intestine to mediate the role of slo-1 in age-associated decline in motor activity and longevity. Transcriptional activity of daf-16/FOXO is negatively regulated by interaction with host cell factor homolog hcf-1; and by cytoplasmic sequestration by association with ftt-2. Inhibition is required for the carbon dioxide (CO2) avoidance response. Upon loss of inhibition, daf-16 translocates to the nucleus to regulate genes that result in delayed reproduction and growth while increasing stress resistance starvation tolerance and longevity. Association with arginine methyltransferase prmt-1 prevents phosphorylation and allows for translocation to the nucleus and the subsequent transcription of longevity-related genes. Modulation of its activity by cGMP levels in sensory neurons regulates lifespan. Has a protective role against muscle dystrophy. Involved in mediating protection against aberrant protein aggregation proteotoxicity. Influences transcription of genes that code for proteins involved in immunity as part of a general stress response. Targets genes that inhibit and stimulate tumor growth. Targets kinases, phosphatases and transcription factors that are primarily involved in signaling and gene regulation. Thought to regulate ins-7 in FOXO-to-FOXO signaling, which coordinates daf-16 expression. Activity is positively regulated by shc-1-mediated inhibition of daf-2 and activation of JNK pathway. Through the regulation of its activity by shc-1-mediated inhibition of daf-2 and activation of JNK pathway, plays a role in maintaining the integrity of the gonad. Functions by indirect interaction with jnk-1 of the mitogen-activated protein kinase (MAPK) pathway. Involved in increased proteasome activity by activating expression of rpn-6.1 in response to proteotoxic stress, leading to enhanced assembly of the 26S proteasome, followed by higher proteasome activity. Also regulates proteasome activity in the intestine by preventing expression of deubiquitinase ubh-4. Represses transcription of natc-1. Involved in regulation of srh-234 expression. Binds to the promoter of the AMPK-gamma regulatory subunit, aakg-4, and activates its transcription. Also activates transcription of AMPK-gamma regulatory subunit, aakg-1. Maintains endoplasmic reticulum (ER) function by inducing protein degradation and elimination to remove misfolded secretory proteins from the ER independently of the ire-1/xbp-1 unfolded protein response pathway. Regulates epidermal innate immunity to nematophagous fungal infection and physical wounding which trigger bli-3 induced ROS release, leading to daf-16 activation independently of daf-2 signaling. May negatively regulate resistance to stress caused by oxidized cholesterol adducts by preventing the activation of daf-9 and nuclear hormone receptor daf-12, two members of the steroid signaling pathway. Promotes apoptosis during embryonic development. Probably through the regulation of the autophagy genes atg-18 and atg-16.2, plays a role in regulating stem cell number in the germline during larval development. Plays a role in learning and memory; including associative memory, and aversive gustatory associated learning known as salt avoidance learning. Plays a role in regulating gene transcription in response to white light exposure. Binds to the promoter of dex-1 to positively regulate its expression in seam cells during the dauer phase. Plays a role in transgenerational lipid accumulation in response to a high-fat diet. In terms of biological role, functions in the Insulin/IGF-1-like signaling (IIS) mediated pathway. May play a role in lifespan modulation, but less significant than that played by isoforms d and f. Its function is as follows. Functions in the Insulin/IGF-1-like signaling (IIS) mediated pathway. Transcript level in the early adult may play a role in lifespan modulation, but effect is more significant than that played by isoform a. The sequence is that of Forkhead box protein O from Caenorhabditis elegans.